Reading from the N-terminus, the 382-residue chain is Galactose-1-phosphate uridylyltransferase (382 aa).

Zn(2+) is bound by residues Cys52 and Cys55. UDP-alpha-D-glucose is bound by residues Ala61 and 77 to 78 (ND). His121 is a Zn(2+) binding site. Asn185 contacts UDP-alpha-D-glucose. His196 is a binding site for Zn(2+). The active-site Tele-UMP-histidine intermediate is the His198. Residue Gln200 participates in UDP-alpha-D-glucose binding. 4 residues coordinate Fe cation: Glu214, His313, His330, and His332. Residues 345-348 (KFLV) and 350-351 (FE) each bind UDP-alpha-D-glucose.

The protein belongs to the galactose-1-phosphate uridylyltransferase type 1 family. In terms of assembly, homodimer. Zn(2+) is required as a cofactor.

The enzyme catalyses alpha-D-galactose 1-phosphate + UDP-alpha-D-glucose = alpha-D-glucose 1-phosphate + UDP-alpha-D-galactose. Its pathway is carbohydrate metabolism; galactose metabolism. In terms of biological role, essential for growth on galactose but not for cellulase induction. The polypeptide is Galactose-1-phosphate uridylyltransferase (gal7) (Hypocrea jecorina (Trichoderma reesei)).